The sequence spans 736 residues: MASIMEGPLSKWTNVMKGWQYRWFVLDYNAGLLSYYTSKDKMMRGSRRGCVRLRGAVIGIDDEDDSTFTITVDQKTFHFQARDADEREKWIHALEETILRHTLQLQGLDSGFVPSVQDFDKKLTEADAYLQILIEQLKLFDDKLQNCKEDEQRKKIETLKETTNSMVESIKHCIVLLQIAKDQSNAEKHADGMISTINPVDAIYQPSPLEPVISTMPSQTVLPPEPVQLCKSEQRPSSLPVGPVLATLGHHQTPTPNSTGSGHSPPSSSLTSPSHVNLSPNTVPEFSYSSSEDEFYDADEFHQSGSSPKRLIDSSGSASVLTHSSSGNSLKRPDTTESLNSSLSNGTSDADLFDSHDDRDDDAEAGSVEEHKSVIMHLLSQVRLGMDLTKVVLPTFILERRSLLEMYADFFAHPDLFVSISDQKDPKDRMVQVVKWYLSAFHAGRKGSVAKKPYNPILGEIFQCHWTLPNDTEENTELVSEGPVPWVSKNSVTFVAEQVSHHPPISAFYAECFNKKIQFNAHIWTKSKFLGMSIGVHNIGQGCVSCLDYDEHYILTFPNGYGRSILTVPWVELGGECNINCSKTGYSANIIFHTKPFYGGKKHRITAEIFSPNDKKSFCSIEGEWNGVMYAKYATGENTVFVDTKKLPIIKKKVRKLEDQNEYESRSLWKDVTFNLKIRDIDAATEAKHRLEERQRAEARERKEKEIQWETRLFHEDGECWVYDEPLLKRLGAAKH.

An N-acetylalanine modification is found at alanine 2. The PH domain maps to 2–99 (ASIMEGPLSK…WIHALEETIL (98 aa)). The interval 231 to 367 (KSEQRPSSLP…DRDDDAEAGS (137 aa)) is disordered. The span at 253–290 (TPTPNSTGSGHSPPSSSLTSPSHVNLSPNTVPEFSYSS) shows a compositional bias: low complexity. Residues serine 306, serine 324, serine 325, serine 326, and serine 329 each carry the phosphoserine modification. Polar residues-rich tracts occupy residues 314 to 329 (SSGS…SGNS) and 336 to 347 (TESLNSSLSNGT). Residue serine 611 is modified to Phosphoserine.

Belongs to the OSBP family. As to quaternary structure, heterodimer with OSBPL11. Interacts with OSBPL10. As to expression, widely expressed.

The protein resides in the late endosome membrane. It is found in the golgi apparatus. The protein localises to the trans-Golgi network membrane. It catalyses the reaction a 1,2-diacyl-sn-glycero-3-phospho-(1D-myo-inositol 4-phosphate)(out) + a 1,2-diacyl-sn-glycero-3-phospho-L-serine(in) = a 1,2-diacyl-sn-glycero-3-phospho-(1D-myo-inositol 4-phosphate)(in) + a 1,2-diacyl-sn-glycero-3-phospho-L-serine(out). Interacts with OSBPL11 to function as lipid transfer proteins. Together they form a heterodimer that localizes at the ER-trans-Golgi membrane contact sites, and exchanges phosphatidylserine (1,2-diacyl-sn-glycero-3-phospho-L-serine, PS) for phosphatidylinositol-4-phosphate (1,2-diacyl-sn-glycero-3-phospho-(1D-myo-inositol 4-phosphate), PI(4)P) between the two organelles, a step that is critical for sphingomyelin synthesis in the Golgi complex. This Homo sapiens (Human) protein is Oxysterol-binding protein-related protein 9 (OSBPL9).